Reading from the N-terminus, the 311-residue chain is Porphobilinogen deaminase (311 aa).

Cys240 bears the S-(dipyrrolylmethanemethyl)cysteine mark.

The protein belongs to the HMBS family. As to quaternary structure, monomer. Requires dipyrromethane as cofactor.

It catalyses the reaction 4 porphobilinogen + H2O = hydroxymethylbilane + 4 NH4(+). Its pathway is porphyrin-containing compound metabolism; protoporphyrin-IX biosynthesis; coproporphyrinogen-III from 5-aminolevulinate: step 2/4. In terms of biological role, tetrapolymerization of the monopyrrole PBG into the hydroxymethylbilane pre-uroporphyrinogen in several discrete steps. The polypeptide is Porphobilinogen deaminase (Natranaerobius thermophilus (strain ATCC BAA-1301 / DSM 18059 / JW/NM-WN-LF)).